The following is a 353-amino-acid chain: Uroporphyrinogen decarboxylase (353 aa).

Substrate-binding positions include 26-30 (RQAGR), aspartate 76, tyrosine 153, threonine 208, and histidine 326.

This sequence belongs to the uroporphyrinogen decarboxylase family. As to quaternary structure, homodimer.

It localises to the cytoplasm. It catalyses the reaction uroporphyrinogen III + 4 H(+) = coproporphyrinogen III + 4 CO2. It functions in the pathway porphyrin-containing compound metabolism; protoporphyrin-IX biosynthesis; coproporphyrinogen-III from 5-aminolevulinate: step 4/4. Functionally, catalyzes the decarboxylation of four acetate groups of uroporphyrinogen-III to yield coproporphyrinogen-III. The polypeptide is Uroporphyrinogen decarboxylase (Chromohalobacter salexigens (strain ATCC BAA-138 / DSM 3043 / CIP 106854 / NCIMB 13768 / 1H11)).